The sequence spans 84 residues: Beta-cardiotoxin CTX21 (84 aa).

Residues 1 to 21 (MKTLLLTLVVVTIVCLDLGYT) form the signal peptide. 4 disulfides stabilise this stretch: Cys24–Cys43, Cys36–Cys61, Cys65–Cys76, and Cys77–Cys82.

The protein belongs to the three-finger toxin family. Short-chain subfamily. Aminergic toxin sub-subfamily. As to expression, expressed by the venom gland.

The protein localises to the secreted. Functionally, acts as a beta-blocker by binding to beta-1 and beta-2 adrenergic receptors (ADRB1 and ADRB2). It dose-dependently decreases the heart rate (bradycardia), whereas conventional cardiotoxins increases it. At 100 mg/kg, intraperitoneal injection into mice provokes labored breathing, impaired locomotion, lack of response to external stimuli, and death (after 30 minutes). The chain is Beta-cardiotoxin CTX21 from Ophiophagus hannah (King cobra).